A 150-amino-acid chain; its full sequence is UPF0098 protein CPn_0877/CP_0992/CPj0877/CpB0906 (150 aa).

Belongs to the UPF0098 family.

The protein is UPF0098 protein CPn_0877/CP_0992/CPj0877/CpB0906 of Chlamydia pneumoniae (Chlamydophila pneumoniae).